The sequence spans 34 residues: Photosystem II reaction center protein M (34 aa).

The helical transmembrane segment at 7 to 27 (GFVATLLFVLVPAIFLIILYI) threads the bilayer.

It belongs to the PsbM family. PSII is composed of 1 copy each of membrane proteins PsbA, PsbB, PsbC, PsbD, PsbE, PsbF, PsbH, PsbI, PsbJ, PsbK, PsbL, PsbM, PsbT, PsbX, PsbY, PsbZ, Psb30/Ycf12, peripheral proteins PsbO, CyanoQ (PsbQ), PsbU, PsbV and a large number of cofactors. It forms dimeric complexes.

Its subcellular location is the cellular thylakoid membrane. Its function is as follows. One of the components of the core complex of photosystem II (PSII). PSII is a light-driven water:plastoquinone oxidoreductase that uses light energy to abstract electrons from H(2)O, generating O(2) and a proton gradient subsequently used for ATP formation. It consists of a core antenna complex that captures photons, and an electron transfer chain that converts photonic excitation into a charge separation. This subunit is found at the monomer-monomer interface. The protein is Photosystem II reaction center protein M of Synechococcus sp. (strain RCC307).